The chain runs to 475 residues: MTAKPPFKVIIVGGSIAGLTLAHCLSKAGIDYIVLEKRKHIAPQEGASIGILPHGGRILEQLGLFYLVEEQIEPLHTAHQYFPDGFAHTTKAPQVIYERFGLPLAFLERRRMLRALYDTLPDSSQVLVNKAVTSVEREVSDLMRVTTYDGSVYRGNLVVGADGVHSRVRAEMWRLATSQSPGVFPEHEMSAMAVEYACIFGISSSVPKLQPGEQVASFNNGRSYLTFPGKNGRVFWFLLLKLDRKYSYSNAPRFSSTDAEKRAERFADDHIWAGVNFRDLWKSKEVFSFVNLEEYLFQQWHWERIVCIGDSMHKMTPNTGQGANCAIEDAAALVNRLHRALKATPDGSSLSSGDIDDLLGEFNRARSRRVREIYQGSRMVVRLQARQNLFLKLLGRYYLPYRGEVAADAASKIIAPAEHLDFLPLATRSATGWHQFKPGQSKTLLIPFLYPVVAFSLCVLAWIGNDYLRNGVVFA.

Residues 1-24 (MTAKPPFKVIIVGGSIAGLTLAHC) form the signal peptide. The FAD site is built by E36, G50, R109, D310, and A323. Residues 444–464 (LLIPFLYPVVAFSLCVLAWIG) form a helical membrane-spanning segment.

It belongs to the paxM FAD-dependent monooxygenase family. FAD is required as a cofactor.

Its subcellular location is the membrane. The enzyme catalyses (2E,6E,10E)-geranylgeranyl-triacetate lactone + AH2 + O2 = (S)-(2E,6E,10E)-epoxygeranylgeranyl-triacetate lactone + A + H2O. It participates in secondary metabolite biosynthesis; terpenoid biosynthesis. Its function is as follows. FAD-dependent monooxygenase spyC; part of the gene cluster that mediates the biosynthesis of meroterpenoids called sartorypyrones. Within the pathway, spyC catalyzes the epoxidation of geranylgeranyl-triacetate lactone at the terminal olein to yield epoxygeranylgeranyl-triacetate lactone. The biosynthesis of sartorypyrones begins with the production of triacetic acid lactone (TAL) by the NR-PKS spyA using one molecule of acetyl-CoA and two molecules of malonyl-CoA. The prenyltransferase spyF then conjugates geranylgeranyl pyrophosphate (GGPP) to TAL to form geranylgeranyl-triacetate lactone, for which the pathway-specific geranylgeranyl pyrophosphate synthase (GGPS) spyE is required to provide GGPP. Subsequently, geranylgeranyl-triacetate lactone is epoxidized at the terminal olein by the FAD-dependent monooxygenase spyC, followed by cyclization of the terpenoid component catalyzed by the terpene cyclase spyD to produce both the bicyclic sartorypyrone F and the monocyclic sartorypyrone D. Finally, the last step of the biosynthesis involves the acetylation of the meroterpenoids sartorypyrones D and F by the acetyltransferase SpyB to produce sartorypyrones A and G, respectively. The protein is FAD-dependent monooxygenase spyC of Aspergillus fumigatus (strain ATCC MYA-4609 / CBS 101355 / FGSC A1100 / Af293) (Neosartorya fumigata).